We begin with the raw amino-acid sequence, 346 residues long: Flap endonuclease 1 (346 aa).

The tract at residues 1-102 (MGVTELGKLI…AEIEERRKTR (102 aa)) is N-domain. The Mg(2+) site is built by D31, D84, E156, E158, D177, D179, and D239. The I-domain stretch occupies residues 120 to 261 (DVAKYAKRAV…KALKLIWEFG (142 aa)).

Belongs to the XPG/RAD2 endonuclease family. FEN1 subfamily. In terms of assembly, interacts with PCNA. PCNA stimulates the nuclease activity without altering cleavage specificity. The cofactor is Mg(2+).

In terms of biological role, structure-specific nuclease with 5'-flap endonuclease and 5'-3' exonuclease activities involved in DNA replication and repair. During DNA replication, cleaves the 5'-overhanging flap structure that is generated by displacement synthesis when DNA polymerase encounters the 5'-end of a downstream Okazaki fragment. Binds the unpaired 3'-DNA end and kinks the DNA to facilitate 5' cleavage specificity. Cleaves one nucleotide into the double-stranded DNA from the junction in flap DNA, leaving a nick for ligation. Also involved in the base excision repair (BER) pathway. Acts as a genome stabilization factor that prevents flaps from equilibrating into structures that lead to duplications and deletions. Also possesses 5'-3' exonuclease activity on nicked or gapped double-stranded DNA. This Pyrobaculum aerophilum (strain ATCC 51768 / DSM 7523 / JCM 9630 / CIP 104966 / NBRC 100827 / IM2) protein is Flap endonuclease 1.